The chain runs to 959 residues: Glycine dehydrogenase (decarboxylating) (959 aa).

Lys-708 bears the N6-(pyridoxal phosphate)lysine mark.

Belongs to the GcvP family. As to quaternary structure, the glycine cleavage system is composed of four proteins: P, T, L and H. Requires pyridoxal 5'-phosphate as cofactor.

It carries out the reaction N(6)-[(R)-lipoyl]-L-lysyl-[glycine-cleavage complex H protein] + glycine + H(+) = N(6)-[(R)-S(8)-aminomethyldihydrolipoyl]-L-lysyl-[glycine-cleavage complex H protein] + CO2. In terms of biological role, the glycine cleavage system catalyzes the degradation of glycine. The P protein binds the alpha-amino group of glycine through its pyridoxal phosphate cofactor; CO(2) is released and the remaining methylamine moiety is then transferred to the lipoamide cofactor of the H protein. The sequence is that of Glycine dehydrogenase (decarboxylating) from Yersinia enterocolitica serotype O:8 / biotype 1B (strain NCTC 13174 / 8081).